Consider the following 311-residue polypeptide: Aldose reductase B (311 aa).

Position 13–23 (13–23 (DIHHIPMIGLG)) interacts with NADP(+). Catalysis depends on Tyr-54, which acts as the Proton donor. His-116 provides a ligand contact to substrate. 219–273 (SPLGQGKCDLLSNETLKSIADKHNKTVANVIFKWLNQRGIVTIPKSSNPARIIEN) is an NADP(+) binding site.

This sequence belongs to the aldo/keto reductase family.

The enzyme catalyses an alditol + NAD(+) = an aldose + NADH + H(+). It catalyses the reaction an alditol + NADP(+) = an aldose + NADPH + H(+). In terms of biological role, catalyzes the NADPH-dependent reduction of a wide variety of carbonyl-containing compounds to their corresponding alcohols with a broad range of catalytic efficiencies. The sequence is that of Aldose reductase B (alrB) from Dictyostelium discoideum (Social amoeba).